The following is a 447-amino-acid chain: GA-binding protein subunit beta-2 (447 aa).

5 ANK repeats span residues 5–34, 37–66, 70–99, 103–132, and 136–166; these read DLGK…PFTT, LGTS…SRDA, VDRT…DVNA, LKMT…DVHA, and FDKS…QVNA. At S253 the chain carries Phosphoserine. Residues 345–395 are a coiled coil; sequence EESKEGTERELLQQRLQEANRRAQEYRHQLLKKEQEAEQYRLRLEAMARQQ. The tract at residues 418-447 is disordered; sequence REMEERETEVTGAVGTAEPHTGVSMETVST.

In terms of assembly, heterotetramer of two alpha and two beta subunits. The C-terminal is necessary for the formation of a heterotetrameric GABP-alpha-2/beta-2 complex, and also facilitates homotypic dimerization. Interacts with ADGRB2.

It localises to the nucleus. May function as transcription factor capable of interacting with purine rich repeats (GA repeats). In Bos taurus (Bovine), this protein is GA-binding protein subunit beta-2 (GABPB2).